A 457-amino-acid chain; its full sequence is MQKYISEARLLLALAIPVILAQIAQTAMGFVDTVMAGGYSATDMAAVAIGTSIWLPAILFGHGLLLALTPVIAQLNGSGRRERIAHQVRQGFWLAGFVSVLIMLVLWNAGYIIRSMENIDPALADKAVGYLRALLWGAPGYLFFQVARNQCEGLAKTKPGMVMGFIGLLVNIPVNYIFIYGHFGMPELGGVGCGVATAAVYWVMFLAMVSYIKRARSMRDIRNEKGTAKPDPAVMKRLIQLGLPIALALFFEVTLFAVVALLVSPLGIVDVAGHQIALNFSSLMFVLPMSLAAAVTIRVGYRLGQGSTLDAQTAARTGLMVGVCMATLTAIFTVSLREQIALLYNDNPEVVTLAAHLMLLAAVYQISDSIQVIGSGILRGYKDTRSIFYITFTAYWVLGLPSGYILALTDLVVEPMGPAGFWIGFIIGLTSAAIMMMLRMRYLQRLPSAIILQRASR.

Residues 1-10 (MQKYISEARL) are Cytoplasmic-facing. A helical transmembrane segment spans residues 11 to 31 (LLALAIPVILAQIAQTAMGFV). Topologically, residues 32-52 (DTVMAGGYSATDMAAVAIGTS) are extracellular. A helical membrane pass occupies residues 53–73 (IWLPAILFGHGLLLALTPVIA). At 74–92 (QLNGSGRRERIAHQVRQGF) the chain is on the cytoplasmic side. Residues 93 to 113 (WLAGFVSVLIMLVLWNAGYII) traverse the membrane as a helical segment. Over 114 to 126 (RSMENIDPALADK) the chain is Extracellular. A helical transmembrane segment spans residues 127–147 (AVGYLRALLWGAPGYLFFQVA). Topologically, residues 148–159 (RNQCEGLAKTKP) are cytoplasmic. A helical membrane pass occupies residues 160-180 (GMVMGFIGLLVNIPVNYIFIY). Residues 181-188 (GHFGMPEL) lie on the Extracellular side of the membrane. A helical transmembrane segment spans residues 189-209 (GGVGCGVATAAVYWVMFLAMV). Over 210–242 (SYIKRARSMRDIRNEKGTAKPDPAVMKRLIQLG) the chain is Cytoplasmic. A helical membrane pass occupies residues 243–263 (LPIALALFFEVTLFAVVALLV). The Extracellular portion of the chain corresponds to 264 to 275 (SPLGIVDVAGHQ). Residues 276–296 (IALNFSSLMFVLPMSLAAAVT) form a helical membrane-spanning segment. The Cytoplasmic segment spans residues 297–313 (IRVGYRLGQGSTLDAQT). A helical membrane pass occupies residues 314–334 (AARTGLMVGVCMATLTAIFTV). The Extracellular segment spans residues 335-349 (SLREQIALLYNDNPE). Residues 350–370 (VVTLAAHLMLLAAVYQISDSI) form a helical membrane-spanning segment. Topologically, residues 371 to 386 (QVIGSGILRGYKDTRS) are cytoplasmic. The helical transmembrane segment at 387 to 407 (IFYITFTAYWVLGLPSGYILA) threads the bilayer. Topologically, residues 408 to 417 (LTDLVVEPMG) are extracellular. A helical membrane pass occupies residues 418 to 438 (PAGFWIGFIIGLTSAAIMMML). The Cytoplasmic portion of the chain corresponds to 439–457 (RMRYLQRLPSAIILQRASR).

The protein belongs to the multi antimicrobial extrusion (MATE) (TC 2.A.66.1) family. MdtK subfamily.

The protein localises to the cell inner membrane. Functionally, multidrug efflux pump that functions probably as a Na(+)/drug antiporter. In Escherichia coli O157:H7, this protein is Multidrug resistance protein MdtK (mdtK).